Consider the following 323-residue polypeptide: Aldo-keto reductase family 1 member C18 (323 aa).

NADP(+) contacts are provided by residues 20–24 and Asp-50; that span reads GFGTY. The active-site Proton donor is the Tyr-55. A substrate-binding site is contributed by His-117. Residues 166-167, Gln-190, 216-221, and 270-280 each bind NADP(+); these read SN, YGALGT, and KSFNEERIREN.

It belongs to the aldo/keto reductase family. As to quaternary structure, monomer. In terms of processing, the N-terminus is blocked. In terms of tissue distribution, corpus luteum (large luteal cells).

It localises to the cytoplasm. The enzyme catalyses (17R,20S)-17,20-dihydroxypregn-4-en-3-one + NADP(+) = 17alpha-hydroxyprogesterone + NADPH + H(+). It catalyses the reaction (17R,20S)-17,20-dihydroxypregn-4-en-3-one + NAD(+) = 17alpha-hydroxyprogesterone + NADH + H(+). Functionally, catalyzes the conversion of progesterone into 20-alpha-dihydroprogesterone (20 alpha-OHP). In Rattus norvegicus (Rat), this protein is Aldo-keto reductase family 1 member C18 (Akr1c18).